The sequence spans 1057 residues: Carbamoyl phosphate synthase large chain (1057 aa).

The segment at 1–401 (MPKRNDIKTI…SLLKAIRSLE (401 aa)) is carboxyphosphate synthetic domain. Positions 129, 169, 175, 176, 208, 210, 215, 241, 242, 243, 284, and 298 each coordinate ATP. Positions 133–327 (RTLMNDLNVP…IAKLAAKIAV (195 aa)) constitute an ATP-grasp 1 domain. Mg(2+)-binding residues include glutamine 284, glutamate 298, and asparagine 300. Positions 284, 298, and 300 each coordinate Mn(2+). The tract at residues 402–546 (YGVHHLGLPN…YGTYETENES (145 aa)) is oligomerization domain. Positions 547–929 (IVTDKEKILV…ALFKGLTGSG (383 aa)) are carbamoyl phosphate synthetic domain. The region spanning 671-861 (EALLRKINVP…MAQLAMRAII (191 aa)) is the ATP-grasp 2 domain. Arginine 707, arginine 746, leucine 748, glutamate 752, glycine 777, valine 778, histidine 779, serine 780, glutamine 820, and glutamate 832 together coordinate ATP. The Mg(2+) site is built by glutamine 820, glutamate 832, and asparagine 834. Residues glutamine 820, glutamate 832, and asparagine 834 each contribute to the Mn(2+) site. One can recognise an MGS-like domain in the interval 930–1057 (VEVKDHGTVL…ESMTFTMRQM (128 aa)). The tract at residues 930 to 1057 (VEVKDHGTVL…ESMTFTMRQM (128 aa)) is allosteric domain.

Belongs to the CarB family. In terms of assembly, composed of two chains; the small (or glutamine) chain promotes the hydrolysis of glutamine to ammonia, which is used by the large (or ammonia) chain to synthesize carbamoyl phosphate. Tetramer of heterodimers (alpha,beta)4. Mg(2+) serves as cofactor. It depends on Mn(2+) as a cofactor.

It carries out the reaction hydrogencarbonate + L-glutamine + 2 ATP + H2O = carbamoyl phosphate + L-glutamate + 2 ADP + phosphate + 2 H(+). The enzyme catalyses hydrogencarbonate + NH4(+) + 2 ATP = carbamoyl phosphate + 2 ADP + phosphate + 2 H(+). The protein operates within amino-acid biosynthesis; L-arginine biosynthesis; carbamoyl phosphate from bicarbonate: step 1/1. Its pathway is pyrimidine metabolism; UMP biosynthesis via de novo pathway; (S)-dihydroorotate from bicarbonate: step 1/3. Large subunit of the glutamine-dependent carbamoyl phosphate synthetase (CPSase). CPSase catalyzes the formation of carbamoyl phosphate from the ammonia moiety of glutamine, carbonate, and phosphate donated by ATP, constituting the first step of 2 biosynthetic pathways, one leading to arginine and/or urea and the other to pyrimidine nucleotides. The large subunit (synthetase) binds the substrates ammonia (free or transferred from glutamine from the small subunit), hydrogencarbonate and ATP and carries out an ATP-coupled ligase reaction, activating hydrogencarbonate by forming carboxy phosphate which reacts with ammonia to form carbamoyl phosphate. The sequence is that of Carbamoyl phosphate synthase large chain from Staphylococcus aureus (strain USA300 / TCH1516).